A 293-amino-acid chain; its full sequence is Pseudouridine-5'-phosphate glycosidase (293 aa).

Glu21 (proton donor) is an active-site residue. Substrate-binding residues include Lys81 and Val101. A Mn(2+)-binding site is contributed by Asp130. 132 to 134 lines the substrate pocket; sequence SQD. Lys151 functions as the Nucleophile in the catalytic mechanism.

This sequence belongs to the pseudouridine-5'-phosphate glycosidase family. Homotrimer. Mn(2+) serves as cofactor.

The catalysed reaction is D-ribose 5-phosphate + uracil = psi-UMP + H2O. Catalyzes the reversible cleavage of pseudouridine 5'-phosphate (PsiMP) to ribose 5-phosphate and uracil. Functions biologically in the cleavage direction, as part of a pseudouridine degradation pathway. The sequence is that of Pseudouridine-5'-phosphate glycosidase from Thermosipho africanus (strain TCF52B).